The chain runs to 195 residues: GTP cyclohydrolase 1 (195 aa).

Zn(2+) contacts are provided by cysteine 85, histidine 88, and cysteine 157.

This sequence belongs to the GTP cyclohydrolase I family. As to quaternary structure, toroid-shaped homodecamer, composed of two pentamers of five dimers.

The catalysed reaction is GTP + H2O = 7,8-dihydroneopterin 3'-triphosphate + formate + H(+). Its pathway is cofactor biosynthesis; 7,8-dihydroneopterin triphosphate biosynthesis; 7,8-dihydroneopterin triphosphate from GTP: step 1/1. The polypeptide is GTP cyclohydrolase 1 (Clostridium acetobutylicum (strain ATCC 824 / DSM 792 / JCM 1419 / IAM 19013 / LMG 5710 / NBRC 13948 / NRRL B-527 / VKM B-1787 / 2291 / W)).